Reading from the N-terminus, the 447-residue chain is Argininosuccinate synthase (447 aa).

ATP is bound by residues 17–25 (AFSGGLDTS) and Ala-43. Tyr-99 serves as a coordination point for L-citrulline. The ATP site is built by Gly-129 and Thr-131. L-aspartate-binding residues include Thr-131, Asn-135, and Asp-136. Position 135 (Asn-135) interacts with L-citrulline. Residue Asp-136 participates in ATP binding. Residues Arg-139 and Ser-192 each coordinate L-citrulline. An ATP-binding site is contributed by Asp-194. Residues Thr-201, Glu-203, and Glu-280 each coordinate L-citrulline.

It belongs to the argininosuccinate synthase family. Type 2 subfamily. Homotetramer.

It is found in the cytoplasm. The enzyme catalyses L-citrulline + L-aspartate + ATP = 2-(N(omega)-L-arginino)succinate + AMP + diphosphate + H(+). It participates in amino-acid biosynthesis; L-arginine biosynthesis; L-arginine from L-ornithine and carbamoyl phosphate: step 2/3. This chain is Argininosuccinate synthase (argG), found in Salmonella typhi.